The sequence spans 744 residues: Prestin (744 aa).

The Cytoplasmic segment spans residues 1–79 (MDHAEENEIP…WLPAYKFKEY (79 aa)). Residues 80–105 (VLGDLVSGISTGVLQLPQGLAFAMLA) form a helical membrane-spanning segment. Residues 106 to 109 (AVPP) are Extracellular-facing. A helical transmembrane segment spans residues 110-125 (VFGLYSSFYPVIMYCF). Topologically, residues 126 to 137 (FGTSRHISIGPF) are cytoplasmic. Residues 138-147 (AVISLMIGGV) form a helical membrane-spanning segment. At 148–178 (AVRLVPDDIVIPGGVNATNGTEARDALRVKV) the chain is on the extracellular side. The short motif at 158–168 (IPGGVNATNGT) is the Involved in motor function element. Residues Asn163 and Asn166 are each glycosylated (N-linked (GlcNAc...) asparagine). A helical transmembrane segment spans residues 179 to 196 (AMSVTLLSGIIQFCLGVC). Topologically, residues 197-208 (RFGFVAIYLTEP) are cytoplasmic. Residues 209–230 (LVRGFTTAAAVHVFTSMLKYLF) form a helical membrane-spanning segment. Over 231 to 243 (GVKTKRYSGIFSV) the chain is Extracellular. Residues 244–252 (VYSTVAVLQ) constitute an intramembrane region (helical). Residues 253-258 (NVKNLN) lie on the Extracellular side of the membrane. Residues 259–282 (VCSLGVGLMVFGLLLGGKEFNERF) form a helical membrane-spanning segment. The Cytoplasmic segment spans residues 283–291 (KEKLPAPIP). Residues 292 to 304 (LEFFAVVMGTGIS) traverse the membrane as a helical segment. Topologically, residues 305-337 (AGFNLHESYSVDVVGTLPLGLLPPANPDTSLFH) are extracellular. The chain crosses the membrane as a helical span at residues 338-361 (LVYVDAIAIAIVGFSVTISMAKTL). Residues 362–370 (ANKHGYQVD) are Cytoplasmic-facing. The helical transmembrane segment at 371 to 388 (GNQELIALGICNSIGSLF) threads the bilayer. Residues 389-396 (QTFSISCS) lie on the Extracellular side of the membrane. Residues 397 to 406 (LSRSLVQEGT) traverse the membrane as a helical segment. Ser398 contributes to the salicylate binding site. At 407–410 (GGKT) the chain is on the cytoplasmic side. Residues 411–429 (QLAGCLASLMILLVILATG) form a helical membrane-spanning segment. Over 430–436 (FLFESLP) the chain is Extracellular. The helical transmembrane segment at 437 to 455 (QAVLSAIVIVNLKGMFMQF) threads the bilayer. Residues 456–469 (SDLPFFWRTSKIEL) are Cytoplasmic-facing. Residues 470 to 484 (TIWLTTFVSSLFLGL) traverse the membrane as a helical segment. A topological domain (extracellular) is located at residue Asp485. The helical transmembrane segment at 486-497 (YGLITAVIIALL) threads the bilayer. The Cytoplasmic portion of the chain corresponds to 498-744 (TVIYRTQSPS…PNATPTTPEA (247 aa)). The tract at residues 505-718 (SPSYKVLGQL…AVLGSHVREA (214 aa)) is extended region for STAS domain. The STAS domain occupies 525-713 (AYEEVKEIPG…HSIHDAVLGS (189 aa)). The disordered stretch occupies residues 717-744 (EAMAEQEASAPPPQDDMEPNATPTTPEA).

The protein belongs to the SLC26A/SulP transporter (TC 2.A.53) family. Homodimer. Interacts (via STAS domain) with CALM; this interaction is calcium-dependent and the STAS domain interacts with only one lobe of CALM which is an elongated conformation. Interacts with MYH1. As to expression, highly expressed in mature outer hair cells, but not in inner hair cells or other cells of the basilar membrane and the organ of Corti.

It is found in the lateral cell membrane. The catalysed reaction is 2 hydrogencarbonate(in) + chloride(out) = 2 hydrogencarbonate(out) + chloride(in). In terms of biological role, voltage-sensitive motor protein that drives outer hair cell (OHC) electromotility (eM) and participates in sound amplification in the hearing organ. Converts changes in the transmembrane electric potential into mechanical displacements resulting in the coupling of its expansion to movement of a charged voltage sensor across the lipid membrane. The nature of the voltage sensor is not completely clear, and two models compete. In the first model, acts as an incomplete transporter where intracellular chloride anion acts as extrinsic voltage sensor that drives conformational change in the protein which is sufficient to produce a length change in the plane of the membrane and hence in the length of the OHC. The second model in which multiple charged amino acid residues are distributed at the intracellular and extracellular membrane interfaces that form an intrinsic voltage sensor, whose movement produces the non-linear capacitance (NLC). However, the effective voltage sensor may be the result of a hybrid voltage sensor assembled from intrinsic charge (charged residues) and extrinsic charge (bound anion). Notably, binding of anions to the anion-binding pocket partially neutralizes the intrinsic positive charge rather than to form an electrically negative sensor, therefore remaining charge may serve as voltage sensor that, after depolarization, moves from down (expanded state) to up (contracted) conformation, which is accompanied by an eccentric contraction of the intermembrane cross-sectional area of the protein as well as a major increase in the hydrophobic thickness of the protein having as consequences the plasma membrane thickening and the cell contraction after membrane depolarization. The anion-binding pocket transits from the inward-open (Down) state, where it is exposed toward the intracellular solvent in the absence of anion, to the occluded (Up) state upon anion binding. Salicylate competes for the anion-binding site and inhibits the voltage-sensor movement, and therefore inhibits the charge transfer and electromotility by displacing Cl(-) from the anion-binding site and by preventing the structural transitions to the contracted state. In addition, can act as a weak Cl(-)/HCO3 (-) antiporter across the cell membrane and so regulate the intracellular pH of the outer hair cells (OHCs), while firstly found as being unable to mediate electrogenic anion transport. Moreover, supports a role in cardiac mechanical amplification serving as an elastic element to enhance the actomyosin- based sarcomere contraction system. The chain is Prestin from Meriones unguiculatus (Mongolian jird).